The chain runs to 335 residues: NADH-quinone oxidoreductase subunit H (335 aa).

The next 8 helical transmembrane spans lie at 11 to 31 (VILT…AGAL), 81 to 101 (VIFT…FAII), 114 to 134 (IGLL…LFAG), 154 to 174 (VSYE…VGSF), 187 to 207 (LWFI…GVAV), 238 to 258 (FFVG…TLFF), 270 to 290 (QLSF…FILL), and 307 to 327 (WKFC…VVLW).

This sequence belongs to the complex I subunit 1 family. In terms of assembly, NDH-1 is composed of 13 different subunits. Subunits NuoA, H, J, K, L, M, N constitute the membrane sector of the complex.

Its subcellular location is the cell inner membrane. It carries out the reaction a quinone + NADH + 5 H(+)(in) = a quinol + NAD(+) + 4 H(+)(out). In terms of biological role, NDH-1 shuttles electrons from NADH, via FMN and iron-sulfur (Fe-S) centers, to quinones in the respiratory chain. The immediate electron acceptor for the enzyme in this species is believed to be ubiquinone. Couples the redox reaction to proton translocation (for every two electrons transferred, four hydrogen ions are translocated across the cytoplasmic membrane), and thus conserves the redox energy in a proton gradient. This subunit may bind ubiquinone. The polypeptide is NADH-quinone oxidoreductase subunit H (Pseudomonas fluorescens (strain ATCC BAA-477 / NRRL B-23932 / Pf-5)).